Here is a 574-residue protein sequence, read N- to C-terminus: Iron hydrogenase 1 (574 aa).

Residues 1-78 (MKTIIINGVQ…GMIINTNSDA (78 aa)) enclose the 2Fe-2S ferredoxin-type domain. [2Fe-2S] cluster contacts are provided by Cys-34, Cys-46, Cys-49, and Cys-62. The 4Fe-4S His(Cys)3-ligated-type domain occupies 78–117 (AVNEKIKSRISQLLDIHEFKCGPCNRRENCEFLKLVIKYK). His-94, Cys-98, Cys-101, Cys-107, Cys-147, Cys-150, Cys-153, Cys-157, Cys-190, Cys-193, Cys-196, Cys-200, Cys-300, Cys-355, Cys-499, and Cys-503 together coordinate [4Fe-4S] cluster. 4Fe-4S ferredoxin-type domains follow at residues 138–167 (KSLT…YAMK) and 181–210 (DEKC…EKSH). Cys-503 contributes to the Fe(2+) binding site.

As to quaternary structure, monomer. Requires [2Fe-2S] cluster as cofactor. [4Fe-4S] cluster serves as cofactor. Fe(2+) is required as a cofactor.

It catalyses the reaction H2 + 2 oxidized [2Fe-2S]-[ferredoxin] = 2 reduced [2Fe-2S]-[ferredoxin] + 2 H(+). This Clostridium pasteurianum protein is Iron hydrogenase 1.